Reading from the N-terminus, the 309-residue chain is Glutaminase (309 aa).

Positions 65, 117, 162, 169, 193, 245, and 263 each coordinate substrate.

It belongs to the glutaminase family. In terms of assembly, homotetramer.

It carries out the reaction L-glutamine + H2O = L-glutamate + NH4(+). The chain is Glutaminase from Geobacillus thermodenitrificans (strain NG80-2).